The sequence spans 273 residues: Formamidopyrimidine-DNA glycosylase (273 aa).

Pro2 serves as the catalytic Schiff-base intermediate with DNA. Glu3 functions as the Proton donor in the catalytic mechanism. Lys58 serves as the catalytic Proton donor; for beta-elimination activity. DNA is bound by residues His91 and Arg110. The FPG-type zinc-finger motif lies at 238–272; that stretch reads QVYGKTGQPCPRCASMIVKIKLGGRGTHLCPHCQK. The active-site Proton donor; for delta-elimination activity is the Arg262.

Belongs to the FPG family. Monomer. Zn(2+) serves as cofactor.

The catalysed reaction is Hydrolysis of DNA containing ring-opened 7-methylguanine residues, releasing 2,6-diamino-4-hydroxy-5-(N-methyl)formamidopyrimidine.. It carries out the reaction 2'-deoxyribonucleotide-(2'-deoxyribose 5'-phosphate)-2'-deoxyribonucleotide-DNA = a 3'-end 2'-deoxyribonucleotide-(2,3-dehydro-2,3-deoxyribose 5'-phosphate)-DNA + a 5'-end 5'-phospho-2'-deoxyribonucleoside-DNA + H(+). Its function is as follows. Involved in base excision repair of DNA damaged by oxidation or by mutagenic agents. Acts as a DNA glycosylase that recognizes and removes damaged bases. Has a preference for oxidized purines, such as 7,8-dihydro-8-oxoguanine (8-oxoG). Has AP (apurinic/apyrimidinic) lyase activity and introduces nicks in the DNA strand. Cleaves the DNA backbone by beta-delta elimination to generate a single-strand break at the site of the removed base with both 3'- and 5'-phosphates. The sequence is that of Formamidopyrimidine-DNA glycosylase from Streptococcus thermophilus (strain ATCC BAA-250 / LMG 18311).